The primary structure comprises 1098 residues: Bifunctional helicase and thymine dioxygenase JBP2 (1098 aa).

Residues M1–A540 are thymine dioxygenase. Fe cation-binding residues include H415, D417, and H465. R479 is a binding site for 2-oxoglutarate. The segment at S541–E1098 is DNA Helicase. The region spanning V555–G730 is the Helicase ATP-binding domain. Position 568-575 (M568–T575) interacts with ATP. Positions D681–H684 match the DEAH box motif. The Helicase C-terminal domain maps to V897 to A1057.

It in the C-terminal section; belongs to the SNF2/RAD54 helicase family. In the N-terminal section; belongs to the TET family. JBP2 subfamily. Fe(2+) serves as cofactor.

The protein resides in the nucleus. The enzyme catalyses ATP + H2O = ADP + phosphate + H(+). It catalyses the reaction thymine + 2-oxoglutarate + O2 = 5-hydroxymethyluracil + succinate + CO2. Its function is as follows. Dioxygenase that catalyzes the first step of DNA base J (beta-d-glucosyl-HOMedU) biosynthesis by converting thymine to 5-hydroxymethyluracil (HOMedU). DNA base J is a hypermodified thymidine residue found in the genome of kinetoplastid parasites, which is localized primarily to repetitive DNA, namely the telomeres, and is implicated in the regulation of antigenic variation. Probably also acts as a DNA helicase. Recognizes and binds specific regions of the genome, hydrolyzes ATP and allows the DNA base J de novo synthesis. Involved in initial synthesis of DNA base J, JBP1 being able to act via the basal level of DNA base J and propagate further synthesis. In contrast to JBP1, it does not specifically bind DNA base J, however it binds chromatin. In Leishmania major, this protein is Bifunctional helicase and thymine dioxygenase JBP2 (JBP2).